The following is a 289-amino-acid chain: Pantothenate synthetase (289 aa).

Position 33-40 (33-40) interacts with ATP; sequence MGNLHDGH. The Proton donor role is filled by H40. Residue Q64 participates in (R)-pantoate binding. Q64 serves as a coordination point for beta-alanine. Position 155–158 (155–158) interacts with ATP; sequence GKKD. Position 161 (Q161) interacts with (R)-pantoate. ATP contacts are provided by residues A184 and 192-195; that span reads LSSR.

This sequence belongs to the pantothenate synthetase family. As to quaternary structure, homodimer.

It localises to the cytoplasm. It catalyses the reaction (R)-pantoate + beta-alanine + ATP = (R)-pantothenate + AMP + diphosphate + H(+). It functions in the pathway cofactor biosynthesis; (R)-pantothenate biosynthesis; (R)-pantothenate from (R)-pantoate and beta-alanine: step 1/1. Its function is as follows. Catalyzes the condensation of pantoate with beta-alanine in an ATP-dependent reaction via a pantoyl-adenylate intermediate. This Acidovorax sp. (strain JS42) protein is Pantothenate synthetase.